Reading from the N-terminus, the 177-residue chain is Peptidyl-tRNA hydrolase (177 aa).

Tyr-12 is a binding site for tRNA. His-17 acts as the Proton acceptor in catalysis. TRNA-binding residues include Phe-63, Asn-65, and Asn-111.

It belongs to the PTH family. Monomer.

It localises to the cytoplasm. The catalysed reaction is an N-acyl-L-alpha-aminoacyl-tRNA + H2O = an N-acyl-L-amino acid + a tRNA + H(+). In terms of biological role, hydrolyzes ribosome-free peptidyl-tRNAs (with 1 or more amino acids incorporated), which drop off the ribosome during protein synthesis, or as a result of ribosome stalling. Catalyzes the release of premature peptidyl moieties from peptidyl-tRNA molecules trapped in stalled 50S ribosomal subunits, and thus maintains levels of free tRNAs and 50S ribosomes. The chain is Peptidyl-tRNA hydrolase from Buchnera aphidicola subsp. Acyrthosiphon pisum (strain 5A).